The primary structure comprises 249 residues: Ubiquinone biosynthesis O-methyltransferase (249 aa).

Residues Arg41, Gly72, Asp93, and Met136 each coordinate S-adenosyl-L-methionine.

This sequence belongs to the methyltransferase superfamily. UbiG/COQ3 family.

The catalysed reaction is a 3-demethylubiquinol + S-adenosyl-L-methionine = a ubiquinol + S-adenosyl-L-homocysteine + H(+). The enzyme catalyses a 3-(all-trans-polyprenyl)benzene-1,2-diol + S-adenosyl-L-methionine = a 2-methoxy-6-(all-trans-polyprenyl)phenol + S-adenosyl-L-homocysteine + H(+). It participates in cofactor biosynthesis; ubiquinone biosynthesis. O-methyltransferase that catalyzes the 2 O-methylation steps in the ubiquinone biosynthetic pathway. The chain is Ubiquinone biosynthesis O-methyltransferase from Mesorhizobium japonicum (strain LMG 29417 / CECT 9101 / MAFF 303099) (Mesorhizobium loti (strain MAFF 303099)).